Reading from the N-terminus, the 145-residue chain is Synaptojanin-2-binding protein (145 aa).

Over 1-117 (MNGRVDYLVS…VHRGDGEPSG (117 aa)) the chain is Cytoplasmic. Residues 13-100 (EINLTRGPSG…AVSLRVQHRL (88 aa)) enclose the PDZ domain. Residues 118–138 (VPVAVVLLPVFALTLVAVWAF) form a helical membrane-spanning segment. Residues 139 to 145 (VRYRKQL) are Mitochondrial intermembrane-facing.

Binds (via the PDZ domain) to isoform 2A of SYNJ2 (via the unique motif in the C-terminus). Interacts (via C-terminus) with RALBP1. Interacts (via PDZ domain) with ACVR2A (via C-terminus) and ACVR2B (via C-terminus). Forms a ternary complex with ACVR2A and RALBP1. Interacts with MAPK12. Interacts with DLL1; enhances DLL1 protein stability, and promotes notch signaling in endothelial cells. In terms of tissue distribution, widely expressed.

It is found in the mitochondrion outer membrane. Its function is as follows. Regulates endocytosis of activin type 2 receptor kinases through the Ral/RALBP1-dependent pathway and may be involved in suppression of activin-induced signal transduction. The polypeptide is Synaptojanin-2-binding protein (Synj2bp) (Rattus norvegicus (Rat)).